The sequence spans 433 residues: Succinate--CoA ligase [GDP-forming] subunit beta, mitochondrial (433 aa).

Residues 1–38 (MASPVAIAAQAGKLLRERALRPLLAVRSQAGHLTPRRW) constitute a mitochondrion transit peptide. The region spanning 47–275 (KKLMSEHGVR…NAEFRQKDIF (229 aa)) is the ATP-grasp domain. Position 58 (Gln58) interacts with GTP. Position 67 is an N6-acetyllysine; alternate (Lys67). Lys67 carries the post-translational modification N6-succinyllysine; alternate. Lys74 is modified (N6-acetyllysine). The residue at position 79 (Lys79) is an N6-succinyllysine. 91–93 (GRG) is a binding site for GTP. Residues Lys112, Lys133, and Lys140 each carry the N6-acetyllysine modification. Leu147 lines the GTP pocket. Residue Ser162 is modified to Phosphoserine. At Lys201 the chain carries N6-acetyllysine. Ser217 carries the post-translational modification Phosphoserine. Residues Lys219 and Lys228 each carry the N6-acetyllysine modification. 2 residues coordinate Mg(2+): Asn244 and Asp258. Lys272 carries the post-translational modification N6-acetyllysine. Asn309 lines the substrate pocket. Position 339 is an N6-succinyllysine (Lys339). At Lys348 the chain carries N6-acetyllysine. 366–368 (GIV) lines the substrate pocket. Residues Lys387, Lys407, and Lys424 each carry the N6-acetyllysine modification.

It belongs to the succinate/malate CoA ligase beta subunit family. GTP-specific subunit beta subfamily. In terms of assembly, heterodimer of an alpha and a beta subunit. The beta subunit determines specificity for GTP. It depends on Mg(2+) as a cofactor.

It is found in the mitochondrion. The enzyme catalyses GTP + succinate + CoA = succinyl-CoA + GDP + phosphate. The protein operates within carbohydrate metabolism; tricarboxylic acid cycle; succinate from succinyl-CoA (ligase route): step 1/1. Functionally, GTP-specific succinyl-CoA synthetase functions in the citric acid cycle (TCA), coupling the hydrolysis of succinyl-CoA to the synthesis of GTP and thus represents the only step of substrate-level phosphorylation in the TCA. The beta subunit provides nucleotide specificity of the enzyme and binds the substrate succinate, while the binding sites for coenzyme A and phosphate are found in the alpha subunit. The sequence is that of Succinate--CoA ligase [GDP-forming] subunit beta, mitochondrial from Mus musculus (Mouse).